The following is a 262-amino-acid chain: Phosphonates import ATP-binding protein PhnC (262 aa).

An ABC transporter domain is found at 5-253 (IRVEKLAKTF…RFDHLYRSIN (249 aa)). Residue 37 to 44 (GPSGSGKS) participates in ATP binding.

The protein belongs to the ABC transporter superfamily. Phosphonates importer (TC 3.A.1.9.1) family. As to quaternary structure, the complex is composed of two ATP-binding proteins (PhnC), two transmembrane proteins (PhnE) and a solute-binding protein (PhnD).

The protein resides in the cell inner membrane. The enzyme catalyses phosphonate(out) + ATP + H2O = phosphonate(in) + ADP + phosphate + H(+). Its function is as follows. Part of the ABC transporter complex PhnCDE involved in phosphonates import. Responsible for energy coupling to the transport system. The polypeptide is Phosphonates import ATP-binding protein PhnC (Shigella dysenteriae serotype 1 (strain Sd197)).